The primary structure comprises 291 residues: 2-C-methyl-D-erythritol 4-phosphate cytidylyltransferase (291 aa).

A disordered region spans residues 1–23 (MTERDFDTPVETPTVQPAPAQGT).

This sequence belongs to the IspD/TarI cytidylyltransferase family. IspD subfamily.

The enzyme catalyses 2-C-methyl-D-erythritol 4-phosphate + CTP + H(+) = 4-CDP-2-C-methyl-D-erythritol + diphosphate. It participates in isoprenoid biosynthesis; isopentenyl diphosphate biosynthesis via DXP pathway; isopentenyl diphosphate from 1-deoxy-D-xylulose 5-phosphate: step 2/6. Catalyzes the formation of 4-diphosphocytidyl-2-C-methyl-D-erythritol from CTP and 2-C-methyl-D-erythritol 4-phosphate (MEP). The chain is 2-C-methyl-D-erythritol 4-phosphate cytidylyltransferase from Bifidobacterium longum subsp. infantis (strain ATCC 15697 / DSM 20088 / JCM 1222 / NCTC 11817 / S12).